The chain runs to 106 residues: UPF0060 membrane protein Bphy_5052 (106 aa).

Helical transmembrane passes span 4 to 24 (LLLY…PWRW), 30 to 50 (SVWL…LLTF), 58 to 78 (VYAA…WCVD), and 82 to 102 (PSAW…IIAF).

It belongs to the UPF0060 family.

Its subcellular location is the cell inner membrane. The sequence is that of UPF0060 membrane protein Bphy_5052 from Paraburkholderia phymatum (strain DSM 17167 / CIP 108236 / LMG 21445 / STM815) (Burkholderia phymatum).